The primary structure comprises 237 residues: DCN1-like protein 5 (237 aa).

Ser41 is modified (phosphoserine). The 187-residue stretch at 46-232 (FSRKKCLAWF…LLDEFVEWQK (187 aa)) folds into the DCUN1 domain.

Part of a complex that contains DCUN1D5, CUL1 and RBX1; this interaction is bridged by CUL1. Interacts (via the DCUN1 domain) with the unneddylated cullins: interacts with CUL1, CUL2, CUL3, CUL4A, CUL4B and CUL5; these interactions promote the cullin neddylation and the identity of the cullin dictates the affinity of the interaction. Interacts (via DCUN1 domain) with UBE2M (N-terminally acetylated form) and probably with UBE2F (N-terminally acetylated form). May also interact with regulators or subunits of cullin-RING ligases such as RBX1, RNF7, ELOB and DDB1; these interactions are bridged by cullins. Interacts with CAND1; this interaction is bridged by cullins and strongly inhibits the neddylation of cullins. These CAND-cullin-DCNL complexes can only be neddylated in the presence of a substrate adapter. Phosphorylation at Ser-41 is independent of cullin's interaction. Phosphorylated in response to both TICAM1 and MYD88 dependent Toll-like receptor (TLR) pathway activation. Phosphorylated in response to IL1B stimulation.

Its subcellular location is the nucleus. The protein resides in the cytoplasm. It localises to the cytoskeleton. The protein localises to the spindle. Its function is as follows. Contributes to the neddylation of all cullins by transferring NEDD8 from N-terminally acetylated NEDD8-conjugating E2s enzyme to different cullin C-terminal domain-RBX complexes which is necessary for the activation of cullin-RING E3 ubiquitin ligases (CRLs). May play a role in DNA damage response and may participate in cell proliferation and anchorage-independent cell growth. In Rattus norvegicus (Rat), this protein is DCN1-like protein 5.